Here is a 138-residue protein sequence, read N- to C-terminus: Large ribosomal subunit protein uL16 (138 aa).

Positions 1–16 are enriched in basic residues; sequence MLIPKRVKFRRQHRPN. The interval 1 to 25 is disordered; it reads MLIPKRVKFRRQHRPNRSGMSKGGN.

It belongs to the universal ribosomal protein uL16 family. In terms of assembly, part of the 50S ribosomal subunit.

Its function is as follows. Binds 23S rRNA and is also seen to make contacts with the A and possibly P site tRNAs. The chain is Large ribosomal subunit protein uL16 from Corynebacterium urealyticum (strain ATCC 43042 / DSM 7109).